The sequence spans 752 residues: Zinc finger protein 425 (752 aa).

The KRAB domain occupies 9 to 80 (VTFDDVALYF…EQGCLDKTRR (72 aa)). 19 C2H2-type zinc fingers span residues 190-212 (YSCY…KRSH), 246-268 (FQCS…QVVH), 274-296 (YPCP…LCLH), 302-324 (FCCG…LRLH), 330-352 (FQCP…LTQH), 358-380 (FHCP…QRTH), 386-408 (FSCG…IRVH), 414-436 (FSCP…GLQH), 442-464 (FQCP…QRLH), 470-492 (FPCA…TRVH), 498-520 (FPCG…LKVH), 526-548 (FSCA…TRLH), 554-576 (FQCP…QRMH), 582-604 (FACG…LRLH), 610-632 (YQCP…LLQH), 638-660 (FSCV…IRVH), 666-688 (FQCP…LYKH), 694-716 (FQCP…LCLH), and 722-744 (FSCD…IAVH).

It belongs to the krueppel C2H2-type zinc-finger protein family.

It is found in the nucleus. The protein resides in the cytoplasm. Functionally, acts as a transcriptional repressor. The polypeptide is Zinc finger protein 425 (ZNF425) (Homo sapiens (Human)).